Reading from the N-terminus, the 420-residue chain is Pre-mRNA-splicing factor RBM22 (420 aa).

At Ala2 the chain carries N-acetylalanine. 2 positions are modified to phosphoserine: Ser4 and Ser102. Glycyl lysine isopeptide (Lys-Gly) (interchain with G-Cter in SUMO2) cross-links involve residues Lys139 and Lys149. Residues 159–186 form a C3H1-type zinc finger; sequence RNRPHICSFWVKGECKRGEECPYRHEKP. Lys212 bears the N6-acetyllysine mark. One can recognise an RRM domain in the interval 232-305; that stretch reads TTLYVGGLGD…RRLNVKWGRS (74 aa). Lys290 is covalently cross-linked (Glycyl lysine isopeptide (Lys-Gly) (interchain with G-Cter in SUMO2)). 2 disordered regions span residues 303–343 and 372–420; these read GRSQ…AAEE and APPP…HSSP. A compositionally biased stretch (basic and acidic residues) spans 309–318; that stretch reads RGKEKEKDGT.

It belongs to the SLT11 family. Component of the pre-catalytic and catalytic spliceosome complexes. Component of the postcatalytic spliceosome P complex. Interacts with PDCD6; the interaction induces translocation of PDCD6 in the cytoplasm. Interacts with PPIL1.

Its subcellular location is the nucleus. It localises to the cytoplasm. Functionally, required for pre-mRNA splicing as component of the activated spliceosome. Involved in the first step of pre-mRNA splicing. Binds directly to the internal stem-loop (ISL) domain of the U6 snRNA and to the pre-mRNA intron near the 5' splice site during the activation and catalytic phases of the spliceosome cycle. Involved in both translocations of the nuclear SLU7 to the cytoplasm and the cytosolic calcium-binding protein PDCD6 to the nucleus upon cellular stress responses. This chain is Pre-mRNA-splicing factor RBM22 (RBM22), found in Homo sapiens (Human).